The sequence spans 104 residues: L-rhamnose mutarotase (104 aa).

Tyr18 is a binding site for substrate. Catalysis depends on His22, which acts as the Proton donor. Substrate is bound by residues Tyr41 and 76–77 (WW).

It belongs to the rhamnose mutarotase family. As to quaternary structure, homodimer.

It is found in the cytoplasm. The enzyme catalyses alpha-L-rhamnose = beta-L-rhamnose. The protein operates within carbohydrate metabolism; L-rhamnose metabolism. Functionally, involved in the anomeric conversion of L-rhamnose. This is L-rhamnose mutarotase from Enterobacter sp. (strain 638).